The primary structure comprises 63 residues: Chymotrypsin/elastase isoinhibitor 1 (63 aa).

5 disulfides stabilise this stretch: cysteine 5/cysteine 38, cysteine 14/cysteine 33, cysteine 17/cysteine 29, cysteine 21/cysteine 60, and cysteine 40/cysteine 54. The 56-residue stretch at 5 to 60 (CGPNEVWTECTGCEMKCGPDENTPCPLMCRRPSCECSPGRGMRRTNDGKCIPASQC) folds into the TIL domain.

The protein belongs to the serine protease inhibitor-like (TIL domain-containing) family.

It localises to the secreted. In terms of biological role, defends the organism against the host's proteinases. The sequence is that of Chymotrypsin/elastase isoinhibitor 1 from Ascaris suum (Pig roundworm).